The following is a 117-amino-acid chain: uncharacterized protein (117 aa).

The signal sequence occupies residues 1–38 (MIIDSSRIPSFTQLHSTMTRAPLLLLCVALVLLGHVNG).

The protein resides in the secreted. This is an uncharacterized protein from Homo sapiens (Human).